Consider the following 427-residue polypeptide: Flotillin-1 (427 aa).

Residues S19, S163, and S385 each carry the phosphoserine modification. T387 carries the phosphothreonine modification.

The protein belongs to the band 7/mec-2 family. Flotillin subfamily. In terms of assembly, heterooligomeric complex of flotillin-1 and flotillin-2 and caveolin-1 and caveolin-2. Interacts with ECPAS.

It is found in the cell membrane. The protein resides in the endosome. It localises to the membrane. Its subcellular location is the caveola. The protein localises to the melanosome. It is found in the membrane raft. In terms of biological role, may act as a scaffolding protein within caveolar membranes, functionally participating in formation of caveolae or caveolae-like vesicles. The protein is Flotillin-1 (FLOT1) of Homo sapiens (Human).